Consider the following 371-residue polypeptide: Protein arginine N-methyltransferase 1 (371 aa).

Positions 50–361 (KDYYFDSYAH…DLDFKGQLCE (312 aa)) constitute an SAM-dependent MTase PRMT-type domain. 4 residues coordinate S-adenosyl-L-methionine: H63, R72, G96, and E118. Position 72 (R72) interacts with S-adenosyl-L-homocysteine. E118 is an S-adenosyl-L-homocysteine binding site. K134 carries the N6-succinyllysine modification. K145 is covalently cross-linked (Glycyl lysine isopeptide (Lys-Gly) (interchain with G-Cter in ubiquitin)). The S-adenosyl-L-homocysteine site is built by V146 and E147. Position 147 (E147) interacts with S-adenosyl-L-methionine. Active-site residues include E162 and E171. Residues K228 and K233 each carry the N6-acetyllysine modification. Phosphoserine occurs at positions 304 and 307.

This sequence belongs to the class I-like SAM-binding methyltransferase superfamily. Protein arginine N-methyltransferase family. As to quaternary structure, homodimer. Homooctamer; individual homodimers associates to form a homooctamer. Individual homodimers can associate to form a homohexamer. Heterodimer with PRMT8. Interacts with BTG1, BTG2, NFATC2IP and IFNAR1. Interacts with and methylates CHTOP, thereby enabling the interaction of CHTOP with the 5FMC complex. Interacts with ILF3 and SUPT5H. Interacts with and methylates FOXO1, leading to the nuclear retention of FOXO1 and the stimulation of FOXO1 transcriptional activity. Methylation of FOXO1 is increased upon oxidative stress. Interacts with and probably methylates ATXN2L. Component of the methylosome, a 20S complex containing at least CLNS1A/pICln, PRMT5/SKB1, WDR77/MEP50, PRMT1 and ERH. Interacts with DHX9 (via RGG region). Interacts (via N-terminus) with HABP4. Interacts with MAP3K5/ASK1; the interaction results in MAP3K5 methylation by PRMT1 which inhibits MAP3K5 activation. Interacts with TRIM48; the interaction results in ubiquitination of PRMT1 by TRIM48, leading to PRMT1 proteasomal degradation and activation of MAP3K5. Interacts with GATOR1 complex; this interaction is S-adenosyl-L-methionine (SAM) dependent and is perturbated by SAMTOR in a SAM-sensitive manner. Interacts with GFI1; promoting recognition and binding of MRE11 and TP53BP1 substrates by PRMT1. In terms of processing, polyubiquitinated at Lys-145 by the SCF(FBXL17) complex, leading to its subsequent degradation. Ubiquitination is regulated by acetylation at Lys-228 and Lys-233. Polyubiquitinated by E3 ubiquitin-protein ligase TRIM48, leading to suppression of MAP3K5/ASK1 methylation and subsequent MAP3K5 activation. Post-translationally, acetylation at Lys-228 and Lys-233 regulates ubiquitination by the SCF(FBXL17) complex. Acetylated at Lys-233 by p300/EP300. Deacetylated at Lys-228 and Lys-233 by SIRT1. In terms of tissue distribution, widely expressed. Expressed strongly in colorectal cancer cells (at protein level). Expressed strongly in colorectal cancer tissues compared to wild-type colon samples (at protein level). Expressed strongly in colorectal cancer tissues compared to wild-type colon samples.

Its subcellular location is the nucleus. The protein localises to the nucleoplasm. It is found in the cytoplasm. It localises to the cytosol. The protein resides in the lysosome membrane. The enzyme catalyses L-arginyl-[protein] + 2 S-adenosyl-L-methionine = N(omega),N(omega)-dimethyl-L-arginyl-[protein] + 2 S-adenosyl-L-homocysteine + 2 H(+). It carries out the reaction L-arginyl-[protein] + S-adenosyl-L-methionine = N(omega)-methyl-L-arginyl-[protein] + S-adenosyl-L-homocysteine + H(+). The catalysed reaction is N(omega)-methyl-L-arginyl-[protein] + S-adenosyl-L-methionine = N(omega),N(omega)-dimethyl-L-arginyl-[protein] + S-adenosyl-L-homocysteine + H(+). Arginine methyltransferase that methylates (mono and asymmetric dimethylation) the guanidino nitrogens of arginyl residues present in proteins such as ESR1, histone H2, H3 and H4, FMR1, ILF3, HNRNPA1, HNRNPD, NFATC2IP, SUPT5H, TAF15, EWS, HABP4, SERBP1, RBM15, FOXO1, CHTOP, MAP3K5/ASK1, MICU1 and NPRL2. Constitutes the main enzyme that mediates monomethylation and asymmetric dimethylation of histone H4 'Arg-3' (H4R3me1 and H4R3me2a, respectively), a specific tag for epigenetic transcriptional activation. May be involved in the regulation of TAF15 transcriptional activity, act as an activator of estrogen receptor (ER)-mediated transactivation, play a key role in neurite outgrowth and act as a negative regulator of megakaryocytic differentiation, by modulating p38 MAPK pathway. Methylates RBM15, promoting ubiquitination and degradation of RBM15. Methylates MRE11 and TP53BP1, promoting the DNA damage response. Methylates FOXO1 and retains it in the nucleus increasing its transcriptional activity. Methylates CHTOP and this methylation is critical for its 5-hydroxymethylcytosine (5hmC)-binding activity. Methylates MAP3K5/ASK1 at 'Arg-78' and 'Arg-80' which promotes association of MAP3K5 with thioredoxin and negatively regulates MAP3K5 association with TRAF2, inhibiting MAP3K5 stimulation and MAP3K5-induced activation of JNK. Methylates H4R3 in genes involved in glioblastomagenesis in a CHTOP- and/or TET1-dependent manner. Plays a role in regulating alternative splicing in the heart. Methylates NPRL2 at 'Arg-78' leading to inhibition of its GTPase activator activity and then the GATOR1 complex and consequently inducing timely mTORC1 activation under methionine-sufficient conditions. The polypeptide is Protein arginine N-methyltransferase 1 (Homo sapiens (Human)).